The sequence spans 1374 residues: DNA-directed RNA polymerase subunit beta (1374 aa).

Belongs to the RNA polymerase beta chain family. In terms of assembly, the RNAP catalytic core consists of 2 alpha, 1 beta, 1 beta' and 1 omega subunit. When a sigma factor is associated with the core the holoenzyme is formed, which can initiate transcription.

The enzyme catalyses RNA(n) + a ribonucleoside 5'-triphosphate = RNA(n+1) + diphosphate. Its function is as follows. DNA-dependent RNA polymerase catalyzes the transcription of DNA into RNA using the four ribonucleoside triphosphates as substrates. The chain is DNA-directed RNA polymerase subunit beta from Acidovorax sp. (strain JS42).